The following is a 260-amino-acid chain: Mediator of RNA polymerase II transcription subunit 8 (260 aa).

This sequence belongs to the Mediator complex subunit 8 family. In terms of assembly, component of the Mediator complex.

It is found in the nucleus. Its function is as follows. Component of the Mediator complex, a coactivator involved in the regulated transcription of nearly all RNA polymerase II-dependent genes. Mediator functions as a bridge to convey information from gene-specific regulatory proteins to the basal RNA polymerase II transcription machinery. Mediator is recruited to promoters by direct interactions with regulatory proteins and serves as a scaffold for the assembly of a functional preinitiation complex with RNA polymerase II and the general transcription factors. The sequence is that of Mediator of RNA polymerase II transcription subunit 8 (med8) from Emericella nidulans (strain FGSC A4 / ATCC 38163 / CBS 112.46 / NRRL 194 / M139) (Aspergillus nidulans).